A 61-amino-acid chain; its full sequence is Small ribosomal subunit protein uS14 (61 aa).

The Zn(2+) site is built by Cys24, Cys27, Cys40, and Cys43.

This sequence belongs to the universal ribosomal protein uS14 family. Zinc-binding uS14 subfamily. In terms of assembly, part of the 30S ribosomal subunit. Contacts proteins S3 and S10. Zn(2+) serves as cofactor.

Functionally, binds 16S rRNA, required for the assembly of 30S particles and may also be responsible for determining the conformation of the 16S rRNA at the A site. In Geotalea daltonii (strain DSM 22248 / JCM 15807 / FRC-32) (Geobacter daltonii), this protein is Small ribosomal subunit protein uS14.